Reading from the N-terminus, the 318-residue chain is 4-diphosphocytidyl-2-C-methyl-D-erythritol kinase (318 aa).

Lys25 is a catalytic residue. Residue 110 to 120 (PVAGGMAGGSA) participates in ATP binding. Residue Asp152 is part of the active site.

It belongs to the GHMP kinase family. IspE subfamily.

The catalysed reaction is 4-CDP-2-C-methyl-D-erythritol + ATP = 4-CDP-2-C-methyl-D-erythritol 2-phosphate + ADP + H(+). It participates in isoprenoid biosynthesis; isopentenyl diphosphate biosynthesis via DXP pathway; isopentenyl diphosphate from 1-deoxy-D-xylulose 5-phosphate: step 3/6. Its function is as follows. Catalyzes the phosphorylation of the position 2 hydroxy group of 4-diphosphocytidyl-2C-methyl-D-erythritol. The protein is 4-diphosphocytidyl-2-C-methyl-D-erythritol kinase of Mycobacterium tuberculosis (strain ATCC 25177 / H37Ra).